Here is a 367-residue protein sequence, read N- to C-terminus: Pectate trisaccharide-lyase (367 aa).

Positions 1–27 (MLMRFSRVVSLVLLLVFTAVLTGAVKA) are cleaved as a signal peptide. Residues aspartate 144, aspartate 166, and aspartate 170 each contribute to the Ca(2+) site. A PbH1 1 repeat occupies 151–173 (SHHIWIDHCTFVNGNDGAVDIKK). Residue arginine 224 is part of the active site. One copy of the PbH1 2 repeat lies at 263–289 (GAKVHVEGNYFMGYGAVMAEAGIAFLP).

It belongs to the polysaccharide lyase 1 family. In terms of assembly, homotetramer. Ca(2+) is required as a cofactor.

Its subcellular location is the secreted. The enzyme catalyses eliminative cleavage of unsaturated trigalacturonate as the major product from the reducing end of polygalacturonic acid/pectate.. With respect to regulation, completely inactivated by EGTA. Functionally, cleaves unsaturated trigalacturonate from pectin. Activity is highest towards polygalacturonic acid, activity on methylated pectins decreases with an increasing degree of methylation. The protein is Pectate trisaccharide-lyase of Thermotoga maritima (strain ATCC 43589 / DSM 3109 / JCM 10099 / NBRC 100826 / MSB8).